The primary structure comprises 141 residues: Lutropin subunit beta (141 aa).

An N-terminal signal peptide occupies residues 1-20; that stretch reads MEMLQGLLLWLLLNVGGVWA. Cystine bridges form between Cys29–Cys77, Cys43–Cys92, Cys46–Cys130, Cys54–Cys108, Cys58–Cys110, and Cys113–Cys120. Residue Asn33 is glycosylated (N-linked (GlcNAc...) asparagine).

Belongs to the glycoprotein hormones subunit beta family. In terms of assembly, heterodimer of a common alpha chain and a unique beta chain which confers biological specificity to thyrotropin, lutropin, follitropin and gonadotropin.

Its subcellular location is the secreted. In terms of biological role, promotes spermatogenesis and ovulation by stimulating the testes and ovaries to synthesize steroids. The polypeptide is Lutropin subunit beta (LHB) (Ailurus fulgens (Himalayan red panda)).